The primary structure comprises 114 residues: MHILDSVDKASLRSDIPDFRAGDTVKVHVNIVEGSRSRIQVFQGIVIGRQGEGVGETFCVRKVSFQVGVERTFPVHSPVIDHIEVVTRGDVRRAKLYFLRDLRGKKAKIKEKRS.

Belongs to the bacterial ribosomal protein bL19 family.

This protein is located at the 30S-50S ribosomal subunit interface and may play a role in the structure and function of the aminoacyl-tRNA binding site. This is Large ribosomal subunit protein bL19 from Clavibacter michiganensis subsp. michiganensis (strain NCPPB 382).